The primary structure comprises 445 residues: Argininosuccinate synthase (445 aa).

ATP is bound by residues 17–25 (AFSGGLDTS) and Ala-43. Tyr-99 serves as a coordination point for L-citrulline. Residues Gly-129 and Thr-131 each coordinate ATP. Residues Thr-131, Asn-135, and Asp-136 each contribute to the L-aspartate site. Asn-135 is a binding site for L-citrulline. Asp-136 provides a ligand contact to ATP. The L-citrulline site is built by Arg-139 and Ser-192. ATP is bound at residue Asp-194. L-citrulline-binding residues include Thr-201, Glu-203, and Glu-280.

This sequence belongs to the argininosuccinate synthase family. Type 2 subfamily. In terms of assembly, homotetramer.

Its subcellular location is the cytoplasm. The catalysed reaction is L-citrulline + L-aspartate + ATP = 2-(N(omega)-L-arginino)succinate + AMP + diphosphate + H(+). It participates in amino-acid biosynthesis; L-arginine biosynthesis; L-arginine from L-ornithine and carbamoyl phosphate: step 2/3. The chain is Argininosuccinate synthase from Rhodopseudomonas palustris (strain BisA53).